Here is a 270-residue protein sequence, read N- to C-terminus: Hairy and enhancer of split-related protein helt (270 aa).

The tract at residues 1–24 (MNARALYKRPPPVSSSQSEASGKR) is disordered. One can recognise a bHLH domain in the interval 59–114 (KTPVSHKVIEKRRRDRINRCLNELGKTVPMALAKQNSGKLEKAEILEMTVQYLRAL). Residues 136-171 (FHYGYHECMKNLVHYLTTVERMETKDTKYARILAFL) form the Orange domain.

Belongs to the HEY family.

Its subcellular location is the nucleus. Its function is as follows. Transcriptional repressor which binds preferentially to the canonical E box sequence 5'-CACGCG-3'. The chain is Hairy and enhancer of split-related protein helt (helt) from Danio rerio (Zebrafish).